A 198-amino-acid polypeptide reads, in one-letter code: Large ribosomal subunit protein bL25 (198 aa).

This sequence belongs to the bacterial ribosomal protein bL25 family. CTC subfamily. Part of the 50S ribosomal subunit; part of the 5S rRNA/L5/L18/L25 subcomplex. Contacts the 5S rRNA. Binds to the 5S rRNA independently of L5 and L18.

Its function is as follows. This is one of the proteins that binds to the 5S RNA in the ribosome where it forms part of the central protuberance. The polypeptide is Large ribosomal subunit protein bL25 (Phocaeicola vulgatus (strain ATCC 8482 / DSM 1447 / JCM 5826 / CCUG 4940 / NBRC 14291 / NCTC 11154) (Bacteroides vulgatus)).